Reading from the N-terminus, the 131-residue chain is Modulator protein MzrA (131 aa).

The Cytoplasmic segment spans residues 1–14 (MSIRWLFPKLTPRK). A helical membrane pass occupies residues 15 to 31 (VARILILLALPIIALTQ). The Periplasmic portion of the chain corresponds to 32–131 (SQSLRHSQDD…KLTQKQSKLG (100 aa)).

This sequence belongs to the MzrA family. Interacts with EnvZ.

It localises to the cell inner membrane. In terms of biological role, modulates the activity of the EnvZ/OmpR two-component regulatory system, probably by directly modulating EnvZ enzymatic activity and increasing stability of phosphorylated OmpR. The polypeptide is Modulator protein MzrA (Pectobacterium carotovorum subsp. carotovorum (strain PC1)).